Consider the following 158-residue polypeptide: MSKVPLTARGAEKLREELQRLKTVERPRIIQAIAEAREHGDLKENAEYHAAREQQSFVEGRIQEIEGKLSNAQVIDPAAVNAQGKVIFGATVDLVDEDSGKEVTYQIVGEDEADIKQGLVSVNSPIARALIGKEEGDLVTVQAPGGEREYEIVEVRYS.

A coiled-coil region spans residues 53-73 (EQQSFVEGRIQEIEGKLSNAQ).

It belongs to the GreA/GreB family.

In terms of biological role, necessary for efficient RNA polymerase transcription elongation past template-encoded arresting sites. The arresting sites in DNA have the property of trapping a certain fraction of elongating RNA polymerases that pass through, resulting in locked ternary complexes. Cleavage of the nascent transcript by cleavage factors such as GreA or GreB allows the resumption of elongation from the new 3'terminus. GreA releases sequences of 2 to 3 nucleotides. The polypeptide is Transcription elongation factor GreA (Alkalilimnicola ehrlichii (strain ATCC BAA-1101 / DSM 17681 / MLHE-1)).